A 92-amino-acid chain; its full sequence is Small ribosomal subunit protein uS19c (92 aa).

This sequence belongs to the universal ribosomal protein uS19 family.

Its subcellular location is the plastid. It localises to the chloroplast. Functionally, protein S19 forms a complex with S13 that binds strongly to the 16S ribosomal RNA. In Nandina domestica (Heavenly bamboo), this protein is Small ribosomal subunit protein uS19c.